We begin with the raw amino-acid sequence, 1486 residues long: Chromosome partition protein MukB (1486 aa).

An ATP-binding site is contributed by 34–41; that stretch reads GGNGAGKS. Coiled coils occupy residues 326-418, 444-480, and 509-603; these read LEAD…QYNQ, LETF…QAYQ, and RHLA…RAPV. Residues 666–783 form a flexible hinge region; it reads PGGSEDQRLN…EVPLFGRAAR (118 aa). 3 coiled-coil regions span residues 835–923, 977–1115, and 1209–1266; these read EAEI…AKLE, EMLS…TAKA, and VEAI…QNVS.

Belongs to the SMC family. MukB subfamily. In terms of assembly, homodimerization via its hinge domain. Binds to DNA via its C-terminal region. Interacts, and probably forms a ternary complex, with MukE and MukF via its C-terminal region. The complex formation is stimulated by calcium or magnesium. Interacts with tubulin-related protein FtsZ.

Its subcellular location is the cytoplasm. The protein resides in the nucleoid. Its function is as follows. Plays a central role in chromosome condensation, segregation and cell cycle progression. Functions as a homodimer, which is essential for chromosome partition. Involved in negative DNA supercoiling in vivo, and by this means organize and compact chromosomes. May achieve or facilitate chromosome segregation by condensation DNA from both sides of a centrally located replisome during cell division. This is Chromosome partition protein MukB from Escherichia coli O127:H6 (strain E2348/69 / EPEC).